A 338-amino-acid polypeptide reads, in one-letter code: MSTLRLLISDSYDPWFNLAVEECIFRQMPATQRVLFLWRNADTVVIGRAQNPWKECNTRRMEVDNVRLARRSSGGGAVFHDLGNTCFTFMAGKPEYDKTISTSIVLNALNALGVSAEASGRNDLVVKTVEGDRKVSGSAYRETKDRGFHHGTLLLNADLSRLANYLNPDKKKLAAKGITSVRSRVTNLTELLPGITHEQVCEAITKAFFAHYGERVEAEIISPDKTPDLPNFAETFARQSSWEWNFGQAPAFSHLLDERFSWGGVELHFDVEKGHITRAQVFTDSLNPAPLEAFAGRLQGCLYRADMLQQECEALLVDFPDQEKELRELSTWIAGAVR.

In terms of domain architecture, BPL/LPL catalytic spans 29–216 (PATQRVLFLW…AFFAHYGERV (188 aa)). ATP contacts are provided by residues Arg71, 76-79 (GAVF), and Lys134. Residue Lys134 coordinates (R)-lipoate.

This sequence belongs to the LplA family. As to quaternary structure, monomer.

It localises to the cytoplasm. It carries out the reaction L-lysyl-[lipoyl-carrier protein] + (R)-lipoate + ATP = N(6)-[(R)-lipoyl]-L-lysyl-[lipoyl-carrier protein] + AMP + diphosphate + H(+). Its pathway is protein modification; protein lipoylation via exogenous pathway; protein N(6)-(lipoyl)lysine from lipoate: step 1/2. It functions in the pathway protein modification; protein lipoylation via exogenous pathway; protein N(6)-(lipoyl)lysine from lipoate: step 2/2. In terms of biological role, catalyzes both the ATP-dependent activation of exogenously supplied lipoate to lipoyl-AMP and the transfer of the activated lipoyl onto the lipoyl domains of lipoate-dependent enzymes. This Shigella dysenteriae serotype 1 (strain Sd197) protein is Lipoate-protein ligase A.